The sequence spans 1072 residues: MPKRLDINTILVIGSGPIVIGQAAEFDYSGTQACQSLKEEGYKVILVNSNPATIMTDTATADKVYIEPLTLEFVSRIIRKERPDAILPTLGGQTGLNMAVELAKSGVLEECGVEILGTKLSAIEQAEDRDLFRTLMQELNEPTPPSEIIHNLDEAYGFVNEIGYPVIVRPAFTLGGTGGGICHNEEELIEIVTSGLKHSPVTQCLLEKSIAGCKEIEYEVMRDSNDNAIVVCNMENIDPVGVHTGDSIVVAPSQTLSDREYQMLRNTSLRIIRALGIEGGCNVQLALDPYSFQYYVIEVNPRVSRSSALASKATGYPIAKLAAKIAVGLTLDEIVNPVTQKTYACFEPALDYVVSKIPRWPFDKFESANRTLGTQMKATGEVMSIGRNLEESLLKAVRSLELGIYHLELDHLKELDKETMKKRIIKADDERLFIVAEAIRQGVTKEEINEWCEMDFFFLQKVENIVNMEREVKANVGNMEVLQTAKEMGFSDHYIAAAWNKTEREIYDMRKGNNMTPVFKMVDTCAAEFESATPYYYSTYADENESIVTDRKSVVVLGSGPIRIGQGVEFDYATVHSVWAIKEAGYEAIIINNNPETVSTDFSISDKLYFEPLTIEDVMHIIDLEKPEGVIVQFGGQTAINLAAKLEEHGVKILGTSLEDLDRAEDRDKFEAALTKLGIPQPVGKTATTVEQAVAIAEEIGYPVLVRPSYVLGGRAMEIVYRQEELLHYMKNAVKVHADHPVLIDRYMVGKEIEVDAISDGENVFIPGIMEHIERAGVHSGDSIGVYPPQSLSEKLKEQIIEHTIALGKGLNIVGLLNIQFVVFKDQVYVIEVNPRASRTVPFLSKITGVPMANVATKVILGQDLVEQGYGTGYHPEEKEVYVKAPVFSFAKLRSVDTTLGPEMKSTGEVMGKDLTLEKALYKGLVASGINIPTHGSVIITVADKDKEEAMEIAKRFHEIGYNLLATAGTAQSLAEQNIPVQVVNKIDSEDYNLLDIIRQGKAQFVINTLTKGKQPARDGFRIRRESVENGVACLTSLDTTRAILRVLESMTFSAHSMKEITQTKRHEVVHA.

A carboxyphosphate synthetic domain region spans residues 1-401 (MPKRLDINTI…SLLKAVRSLE (401 aa)). Residues R129, R169, G175, G176, K208, I210, E215, G241, V242, H243, Q284, and E298 each coordinate ATP. The region spanning 133–327 (RTLMQELNEP…IAKLAAKIAV (195 aa)) is the ATP-grasp 1 domain. The Mg(2+) site is built by Q284, E298, and N300. Q284, E298, and N300 together coordinate Mn(2+). Residues 402 to 546 (LGIYHLELDH…YSTYADENES (145 aa)) form an oligomerization domain region. A carbamoyl phosphate synthetic domain region spans residues 547-929 (IVTDRKSVVV…ALYKGLVASG (383 aa)). The region spanning 671-861 (EAALTKLGIP…MANVATKVIL (191 aa)) is the ATP-grasp 2 domain. The ATP site is built by R707, R746, E752, G777, V778, H779, S780, Q820, and E832. Mg(2+) is bound by residues Q820, E832, and N834. Mn(2+)-binding residues include Q820, E832, and N834. The MGS-like domain maps to 930 to 1072 (INIPTHGSVI…QTKRHEVVHA (143 aa)). An allosteric domain region spans residues 930–1072 (INIPTHGSVI…QTKRHEVVHA (143 aa)).

Belongs to the CarB family. In terms of assembly, composed of two chains; the small (or glutamine) chain promotes the hydrolysis of glutamine to ammonia, which is used by the large (or ammonia) chain to synthesize carbamoyl phosphate. Tetramer of heterodimers (alpha,beta)4. Requires Mg(2+) as cofactor. The cofactor is Mn(2+).

It catalyses the reaction hydrogencarbonate + L-glutamine + 2 ATP + H2O = carbamoyl phosphate + L-glutamate + 2 ADP + phosphate + 2 H(+). The enzyme catalyses hydrogencarbonate + NH4(+) + 2 ATP = carbamoyl phosphate + 2 ADP + phosphate + 2 H(+). It functions in the pathway amino-acid biosynthesis; L-arginine biosynthesis; carbamoyl phosphate from bicarbonate: step 1/1. It participates in pyrimidine metabolism; UMP biosynthesis via de novo pathway; (S)-dihydroorotate from bicarbonate: step 1/3. Large subunit of the glutamine-dependent carbamoyl phosphate synthetase (CPSase). CPSase catalyzes the formation of carbamoyl phosphate from the ammonia moiety of glutamine, carbonate, and phosphate donated by ATP, constituting the first step of 2 biosynthetic pathways, one leading to arginine and/or urea and the other to pyrimidine nucleotides. The large subunit (synthetase) binds the substrates ammonia (free or transferred from glutamine from the small subunit), hydrogencarbonate and ATP and carries out an ATP-coupled ligase reaction, activating hydrogencarbonate by forming carboxy phosphate which reacts with ammonia to form carbamoyl phosphate. The protein is Carbamoyl phosphate synthase large chain of Bacillus thuringiensis (strain Al Hakam).